Here is an 804-residue protein sequence, read N- to C-terminus: MKFTLSWLKDHLETDATLDEIVEKLTDIGLEVESVDDRAAFRAFTIARVLTATRHPDADKLQVLSVDTGDGKPVQVVCGAPNARAGLVGVLGRPGDYVPGLDVTLSVGKIRGVESFGMMCSERELELSDEHNGIIDLAENAPVGTSFAAYMGLDDPIIEIGLTPNRADCTGIRGIARDLAAAGLGTLKNTLPDAVKGEGETPVKVILDQDAGNPFCTGFALRMVKGVKNGPSPKWMQQRLKAIGLRPINALVDITNYVTFDQGRPLHVFDAAKVKGNLTVRTARDGETILALDQREYKLNAGMYVIADENGPESIAGIMGGEHSGCDENTVDVLIESALWDPRMIARTGRELGIVTDARYRFERGVDPEMMVPGAEIATKLVLELCGGQPTVLDVVGYKPHTARVIDFPVTEVKRLTGLDVSYEDAFDILKRLGFGVEGDGKTIRATVPSWRGDVEGKADLVEEVMRIHGINRIDPQPLPSHGAVNGRILTTLQIRTRHARRMLASRGMMEAVTYSFISEAQAKAFGGGKPELKLANPIAADMSDMRPSLLPGLLAAAQRNADRGFGDIALFEVSGIYEGDTPDKQRRVAGGVRRGTAKVEGAGRFWAGNAAPVGVFDAKADALAALEAAGAPVDRIQIEAGGPEWLHPGRSGTLKLGPKVVLGTFGEFHPDTLEALDVSGALCGFEVYLDAIPEPKAKSARTKPALSLSLFQSLKRDYAFVVDAAVEAGNVVKAVSSADKKLIVGVQVFDIFTGASLGEGKKSIAVEVLLQPQDRTLTDEDLEALSKQIVASVAKQTGGVLRG.

The tRNA-binding domain maps to arginine 38–alanine 148. In terms of domain architecture, B5 spans histidine 401–proline 476. Residues aspartate 454, aspartate 460, glutamate 463, and glutamate 464 each contribute to the Mg(2+) site. The FDX-ACB domain occupies serine 710–arginine 803.

Belongs to the phenylalanyl-tRNA synthetase beta subunit family. Type 1 subfamily. As to quaternary structure, tetramer of two alpha and two beta subunits. The cofactor is Mg(2+).

The protein resides in the cytoplasm. It carries out the reaction tRNA(Phe) + L-phenylalanine + ATP = L-phenylalanyl-tRNA(Phe) + AMP + diphosphate + H(+). The chain is Phenylalanine--tRNA ligase beta subunit from Brucella suis biovar 1 (strain 1330).